A 410-amino-acid chain; its full sequence is Cysteine desulfurase IscS (410 aa).

Pyridoxal 5'-phosphate is bound by residues 80–81 (AT), asparagine 160, glutamine 188, and 208–210 (SGH). An N6-(pyridoxal phosphate)lysine modification is found at lysine 211. Threonine 248 contributes to the pyridoxal 5'-phosphate binding site. Cysteine 334 acts as the Cysteine persulfide intermediate in catalysis. Cysteine 334 contributes to the [2Fe-2S] cluster binding site.

Belongs to the class-V pyridoxal-phosphate-dependent aminotransferase family. NifS/IscS subfamily. Homodimer. Forms a heterotetramer with IscU, interacts with other sulfur acceptors. Requires pyridoxal 5'-phosphate as cofactor.

It is found in the cytoplasm. It carries out the reaction (sulfur carrier)-H + L-cysteine = (sulfur carrier)-SH + L-alanine. Its pathway is cofactor biosynthesis; iron-sulfur cluster biosynthesis. In terms of biological role, master enzyme that delivers sulfur to a number of partners involved in Fe-S cluster assembly, tRNA modification or cofactor biosynthesis. Catalyzes the removal of elemental sulfur atoms from cysteine to produce alanine. Functions as a sulfur delivery protein for Fe-S cluster synthesis onto IscU, an Fe-S scaffold assembly protein, as well as other S acceptor proteins. This Rickettsia akari (strain Hartford) protein is Cysteine desulfurase IscS.